We begin with the raw amino-acid sequence, 560 residues long: Probable pectinesterase/pectinesterase inhibitor 20 (560 aa).

The signal sequence occupies residues 1-24 (MSQKLMFLFTLACLSSLPSPFISA). A pectinesterase inhibitor 20 region spans residues 25–179 (QIPAIGNATS…TKLYGVSLAL (155 aa)). N-linked (GlcNAc...) asparagine glycosylation is found at N31, N168, N251, N255, N268, N307, and N314. A pectinesterase 20 region spans residues 246-544 (VTVIQNGTGN…FTVTNFLVGE (299 aa)). T323 is a binding site for substrate. N340 carries N-linked (GlcNAc...) asparagine glycosylation. Substrate is bound at residue Q353. D376 serves as the catalytic Proton donor; for pectinesterase activity. A disulfide bridge links C390 with C410. D397 (nucleophile; for pectinesterase activity) is an active-site residue. The disordered stretch occupies residues 417–441 (PRKGQSNEVTAQGRTDPNQNTGTAI). The segment covering 419–439 (KGQSNEVTAQGRTDPNQNTGT) has biased composition (polar residues). N-linked (GlcNAc...) asparagine glycosylation is present at N456. R465 and W467 together coordinate substrate. N-linked (GlcNAc...) asparagine glycans are attached at residues N507, N528, and N534.

In the N-terminal section; belongs to the PMEI family. This sequence in the C-terminal section; belongs to the pectinesterase family. As to expression, expressed in flower buds.

The protein localises to the secreted. Its subcellular location is the cell wall. It catalyses the reaction [(1-&gt;4)-alpha-D-galacturonosyl methyl ester](n) + n H2O = [(1-&gt;4)-alpha-D-galacturonosyl](n) + n methanol + n H(+). Its pathway is glycan metabolism; pectin degradation; 2-dehydro-3-deoxy-D-gluconate from pectin: step 1/5. In terms of biological role, acts in the modification of cell walls via demethylesterification of cell wall pectin. The protein is Probable pectinesterase/pectinesterase inhibitor 20 (PME20) of Arabidopsis thaliana (Mouse-ear cress).